Reading from the N-terminus, the 117-residue chain is Large ribosomal subunit protein bL20c (117 aa).

The protein belongs to the bacterial ribosomal protein bL20 family.

The protein resides in the plastid. Its subcellular location is the chloroplast. Binds directly to 23S ribosomal RNA and is necessary for the in vitro assembly process of the 50S ribosomal subunit. It is not involved in the protein synthesizing functions of that subunit. The sequence is that of Large ribosomal subunit protein bL20c from Thalassiosira pseudonana (Marine diatom).